The chain runs to 529 residues: All-trans-zeta-carotene desaturase (529 aa).

12–45 is a binding site for FAD; sequence IVVGAGPGGLSAAINLAGQGFRVTVVEKDAVPGG.

It belongs to the carotenoid/retinoid oxidoreductase family. It depends on FAD as a cofactor.

The catalysed reaction is all-trans-zeta-carotene + 2 A = all-trans-lycopene + 2 AH2. Its pathway is carotenoid biosynthesis; lycopene biosynthesis. Its function is as follows. Dehydrogenates carotenes in the trans conformation: converts all-trans-zeta-carotene into all-trans-lycopene, one of the last dehydrogenation steps of lycopene biosynthesis. The sequence is that of All-trans-zeta-carotene desaturase (carC) from Myxococcus xanthus.